A 238-amino-acid polypeptide reads, in one-letter code: 7-cyano-7-deazaguanine synthase (238 aa).

Phe14–Leu24 is an ATP binding site. Cys195, Cys204, Cys207, and Cys210 together coordinate Zn(2+).

It belongs to the QueC family. Requires Zn(2+) as cofactor.

It catalyses the reaction 7-carboxy-7-deazaguanine + NH4(+) + ATP = 7-cyano-7-deazaguanine + ADP + phosphate + H2O + H(+). Its pathway is purine metabolism; 7-cyano-7-deazaguanine biosynthesis. Its function is as follows. Catalyzes the ATP-dependent conversion of 7-carboxy-7-deazaguanine (CDG) to 7-cyano-7-deazaguanine (preQ(0)). This is 7-cyano-7-deazaguanine synthase from Baumannia cicadellinicola subsp. Homalodisca coagulata.